We begin with the raw amino-acid sequence, 382 residues long: Beta-1,4-galactosyltransferase 6 (382 aa).

The Cytoplasmic segment spans residues 1–15 (MSALKRMMRVSNRSL). A helical; Signal-anchor for type II membrane protein membrane pass occupies residues 16–35 (IAFIFFFSLSTSCLYFIYVA). Residues 36–382 (PGIANTYLFM…MPELAPIEDY (347 aa)) are Lumenal-facing. N-linked (GlcNAc...) asparagine glycosylation is found at Asn-71, Asn-75, Asn-83, Asn-84, Asn-99, and Asn-122. Cysteines 108 and 152 form a disulfide. Residues 163–167 (PFRNR), 202–204 (FNR), 229–230 (VD), Tyr-258, and Trp-290 contribute to the UDP-alpha-D-galactose site. A disulfide bridge links Cys-223 with Cys-242. Asp-230 provides a ligand contact to Mn(2+). 292 to 295 (GEDD) is an N-acetyl-D-glucosamine binding site. N-linked (GlcNAc...) asparagine glycosylation is present at Asn-307. A Mn(2+)-binding site is contributed by His-323. 323–324 (HH) lines the UDP-alpha-D-galactose pocket. Residue Arg-334 participates in N-acetyl-D-glucosamine binding. A glycan (N-linked (GlcNAc...) asparagine) is linked at Asn-367.

Belongs to the glycosyltransferase 7 family. Mn(2+) is required as a cofactor. Requires Mg(2+) as cofactor. The cofactor is Ca(2+). Brain and kidney.

The protein resides in the golgi apparatus. Its subcellular location is the golgi stack membrane. It catalyses the reaction a beta-D-glucosyl-(1&lt;-&gt;1')-N-acylsphing-4-enine + UDP-alpha-D-galactose = a beta-D-Gal-(1-&gt;4)-beta-D-Glc-(1&lt;-&gt;1)-Cer(d18:1(4E)) + UDP + H(+). It functions in the pathway protein modification; protein glycosylation. The protein operates within sphingolipid metabolism. Inhibited by EDTA. Functionally, catalyzes the synthesis of lactosylceramide (LacCer) via the transfer of galactose from UDP-galactose to glucosylceramide (GlcCer). LacCer is the starting point in the biosynthesis of all gangliosides (membrane-bound glycosphingolipids) which play pivotal roles in the CNS including neuronal maturation and axonal and myelin formation. This chain is Beta-1,4-galactosyltransferase 6, found in Mus musculus (Mouse).